The primary structure comprises 315 residues: Replication factor C small subunit (315 aa).

Residue 43–50 (GSPGVGKT) coordinates ATP.

The protein belongs to the activator 1 small subunits family. RfcS subfamily. In terms of assembly, heteromultimer composed of small subunits (RfcS) and large subunits (RfcL).

Functionally, part of the RFC clamp loader complex which loads the PCNA sliding clamp onto DNA. This is Replication factor C small subunit from Methanococcus vannielii (strain ATCC 35089 / DSM 1224 / JCM 13029 / OCM 148 / SB).